Here is a 1310-residue protein sequence, read N- to C-terminus: Major viral transcription factor ICP4 homolog (1310 aa).

Disordered regions lie at residues 117–271 (AGAR…GPVE), 285–454 (GAKA…TPII), and 636–697 (GSSP…LLDK). Residues 341 to 350 (PVEKKPKSRE) are compositionally biased toward basic and acidic residues. Low complexity-rich tracts occupy residues 351 to 364 (FVSSSSSSSSWGSS), 392 to 407 (PSPSNSDDSDSNDGGS), and 648 to 666 (PSPTTPATQAPDPQPSAAA). The Nuclear localization signal signature appears at 677–685 (RLRTPRKRK). Phosphoserine; by viral VZV ORF66 occurs at positions 686 and 722. 2 disordered regions span residues 1193-1258 (GTRF…SFGV) and 1282-1310 (ELLSSSSSSEDEDDVWGGRGGRSPPQSRG). Positions 1217-1227 (RTADDREHALE) are enriched in basic and acidic residues. Positions 1228–1250 (LDDWEVGCEDAWDSEEGGGDDGD) are enriched in acidic residues.

Belongs to the herpesviridae ICP4 family. In terms of assembly, interacts with IE4 and IE63. Interacts with host USF1 and SP1. In terms of processing, phosphorylated by ORF66 protein kinase on Ser-686 and Ser-722. Also phosphorylated by ORF47 protein kinase and by human CSNK2A1/CKII.

It localises to the host nucleus. The protein resides in the host cytoplasm. It is found in the virion tegument. Transcriptional transactivator. May interact with and recruit specific components of the general transcription machinery to viral promoters and stabilize their formation for transcription initiation. Negatively regulates its own transcription. This immediate early (EI) protein may be necessary in virion for viral pathogenesis. This chain is Major viral transcription factor ICP4 homolog, found in Homo sapiens (Human).